The primary structure comprises 462 residues: Amino-acid permease AapA (462 aa).

12 consecutive transmembrane segments (helical) span residues 27 to 47, 48 to 68, 96 to 116, 134 to 154, 160 to 180, 209 to 229, 252 to 272, 279 to 299, 343 to 363, 366 to 386, 410 to 430, and 435 to 455; these read LMAIGGAIGTGLFLGSGKSIH, FAGPSILFAYLITGVFCFFIM, AAFITGWTYWFCWISLAMADL, LPGLLALIILLIMNLATVKLF, WFALIKVIAILALIVTGILLI, GFILSFQMVVFAFVGIELVGL, ILLFYVGALFVIMCIYPWNVL, FVQVFSAVGIVVAASLINFVV, ALFFSSIAILIGVSLNYLMPE, FTLITSVSTICFIFIWGITVI, PLSNYLTLAFLAFILVILALA, and IALFVTPVWFVLLIILYKVQT.

It belongs to the amino acid-polyamine-organocation (APC) superfamily.

It localises to the cell membrane. Functionally, probable amino-acid or metabolite transport protein. This is Amino-acid permease AapA (aapA) from Bacillus subtilis (strain 168).